The primary structure comprises 504 residues: UDP-glycosyltransferase UGT4 (504 aa).

An N-terminal signal peptide occupies residues 1–23; it reads MTLLRDLLLLYINSLLFINPSIG. Residues 24–474 are Lumenal-facing; that stretch reads ENILVFLPTK…SAVIDLYWFQ (451 aa). Asparagine 54, asparagine 66, asparagine 69, and asparagine 422 each carry an N-linked (GlcNAc...) asparagine glycan. Residues 475–495 traverse the membrane as a helical segment; the sequence is YILLDIILFYSLIVLILLCIL. Topologically, residues 496–504 are cytoplasmic; that stretch reads RIFFRMLTK.

The protein belongs to the UDP-glycosyltransferase family.

It is found in the microsome membrane. Its function is as follows. Catalyzes the transfer of a glycosyl group from a UDP-sugar to an acceptor molecule. This Dactylopius coccus (Cochineal) protein is UDP-glycosyltransferase UGT4.